Here is a 290-residue protein sequence, read N- to C-terminus: Nucleoid occlusion protein (290 aa).

Positions 153 to 172 form a DNA-binding region, H-T-H motif; that stretch reads EALAQRLGKGQSTIANKLRL.

The protein belongs to the ParB family.

The protein resides in the cytoplasm. It is found in the nucleoid. Functionally, effects nucleoid occlusion by binding relatively nonspecifically to DNA and preventing the assembly of the division machinery in the vicinity of the nucleoid, especially under conditions that disturb the cell cycle. It helps to coordinate cell division and chromosome segregation by preventing the formation of the Z ring through the nucleoid, which would cause chromosome breakage. This Bacillus cereus (strain AH187) protein is Nucleoid occlusion protein.